We begin with the raw amino-acid sequence, 394 residues long: 2-aminobenzenesulfonate 2,3-dioxygenase subunit alpha (394 aa).

Positions Trp-43–Val-154 constitute a Rieske domain. Residues Cys-85, His-87, Cys-105, and His-108 each contribute to the [2Fe-2S] cluster site. Fe cation-binding residues include His-209 and His-213.

It belongs to the bacterial ring-hydroxylating dioxygenase alpha subunit family. As to quaternary structure, heterotetramer with a alpha2beta2 structure. It depends on [2Fe-2S] cluster as a cofactor. The cofactor is Fe cation.

It carries out the reaction 2-aminobenzenesulfonate + NADH + O2 + 2 H(+) = 2,3-dihydroxybenzenesulfonate + NH4(+) + NAD(+). Its activity is regulated as follows. Inhibited by o-phenanthroline. Its function is as follows. Alpha subunit of the oxygenase component of the 2-aminobenzenesulfonate 2,3-dioxygenase system (deaminating) (ABSDOS). Can use 2-aminobenzenesulfonate (ABS), benzenesulfonate (BS), 4-toluenesulfonate (TS), 2-nitrobenzenesulfonate, 3- and 4-aminobenzenesulfonates, 4-chloro- and 4-hydroxybenzenesulfonates and pyridine-3-sulfonate as substrates. No desulfonation of ABS to aminocatechol or aminophenol detected. The sequence is that of 2-aminobenzenesulfonate 2,3-dioxygenase subunit alpha from Alcaligenes sp.